Reading from the N-terminus, the 300-residue chain is Cytochrome f (300 aa).

Positions 1–32 (MMTYLSKQFSKLLFGQLLFLFIGNLLLKPVQA) are cleaved as a signal peptide. Residues tyrosine 33, cysteine 53, cysteine 56, and histidine 57 each contribute to the heme site. Residues 267–287 (LKTFIAFCVTVFIGQLAFVLK) traverse the membrane as a helical segment.

It belongs to the cytochrome f family. The 4 large subunits of the cytochrome b6-f complex are cytochrome b6, subunit IV (17 kDa polypeptide, petD), cytochrome f and the Rieske protein, while the 4 small subunits are PetG, PetL, PetM and PetN. The complex functions as a dimer. Requires heme as cofactor.

Its subcellular location is the plastid. The protein resides in the chloroplast thylakoid membrane. Functionally, component of the cytochrome b6-f complex, which mediates electron transfer between photosystem II (PSII) and photosystem I (PSI), cyclic electron flow around PSI, and state transitions. This chain is Cytochrome f, found in Cyanidioschyzon merolae (strain NIES-3377 / 10D) (Unicellular red alga).